The primary structure comprises 209 residues: Uracil phosphoribosyltransferase (209 aa).

5-phospho-alpha-D-ribose 1-diphosphate-binding positions include Arg79, Arg104, and 131–139; that span reads DPMLATGGS. Uracil-binding positions include Ile194 and 199 to 201; that span reads GDA. Position 200 (Asp200) interacts with 5-phospho-alpha-D-ribose 1-diphosphate.

It belongs to the UPRTase family. Mg(2+) serves as cofactor.

It catalyses the reaction UMP + diphosphate = 5-phospho-alpha-D-ribose 1-diphosphate + uracil. It functions in the pathway pyrimidine metabolism; UMP biosynthesis via salvage pathway; UMP from uracil: step 1/1. Its activity is regulated as follows. Allosterically activated by GTP. Its function is as follows. Catalyzes the conversion of uracil and 5-phospho-alpha-D-ribose 1-diphosphate (PRPP) to UMP and diphosphate. The chain is Uracil phosphoribosyltransferase from Desulfitobacterium hafniense (strain DSM 10664 / DCB-2).